Consider the following 147-residue polypeptide: Sentan (147 aa).

Positions 14-34 (RLEGEPNPPAAPTSTLAPKNM) are disordered. Residues 25-34 (PTSTLAPKNM) show a composition bias toward polar residues.

Belongs to the S-100 family.

Its subcellular location is the cell projection. The protein resides in the cilium. Its function is as follows. May be a component of the linker structure that bridges the ciliary membrane and peripheral singlet microtubules. The chain is Sentan (SNTN) from Bos taurus (Bovine).